A 392-amino-acid polypeptide reads, in one-letter code: Frizzled-9 (392 aa).

The Extracellular portion of the chain corresponds to 1-35 (ACDNPEKFQYVEKSLSCAPRCSPGVDVYWSREDKD). Residues 36 to 56 (FAFVWMAVWSTLCFVSTAFTV) form a helical membrane-spanning segment. Residues 57–72 (LTFLLDPHRFQYPERP) are Cytoplasmic-facing. The helical transmembrane segment at 73 to 93 (IIFLSMCYNVYSVAFIIRSVA) threads the bilayer. The Extracellular segment spans residues 94–119 (GAETIACDRENGELYIIQEGLESTGC). The chain crosses the membrane as a helical span at residues 120–140 (TIVFLILYYFGMASSLWWVVL). Topologically, residues 141–161 (TLTWFLAAGKKWGHEAIEAHS) are cytoplasmic. Residues 162 to 182 (SYFHMAAWGIPAMKTIVILTM) form a helical membrane-spanning segment. Topologically, residues 183–206 (RKVAGDELTGLCYVGSMDVSALTG) are extracellular. A helical membrane pass occupies residues 207–227 (FVLIPLSCYLVVGTSFILTGF). Residues 228 to 253 (VALFHIRKIMKTGGTNTEKLEKLMVK) are Cytoplasmic-facing. A helical membrane pass occupies residues 254-274 (IGVFSILYTVPATCVIVCYFY). Residues 275–312 (ERLNVDYWNLRALERACVPLPGRRAADCSLEASVPTVA) lie on the Extracellular side of the membrane. Residues 313–333 (VFMLKIFMSLVVGITSGVWVW) form a helical membrane-spanning segment. The Cytoplasmic portion of the chain corresponds to 334–392 (SSKTLQTWQSLCNRKLGVRTRGKPCSGVSCGGVHCHYKAPTVMLHMTKTDPYLDNPTHV). Residues 336–341 (KTLQTW) carry the Lys-Thr-X-X-X-Trp motif, mediates interaction with the PDZ domain of Dvl family members motif. Residues 390–392 (THV) carry the PDZ-binding motif.

The protein belongs to the G-protein coupled receptor Fz/Smo family.

The protein resides in the cell membrane. Functionally, receptor for WNT2 that is coupled to the beta-catenin canonical signaling pathway, which leads to the activation of disheveled proteins, inhibition of GSK-3 kinase, nuclear accumulation of beta-catenin and activation of Wnt target genes. In Gallus gallus (Chicken), this protein is Frizzled-9 (FZD9).